Consider the following 191-residue polypeptide: Outer membrane lipoprotein DolP (191 aa).

An N-terminal signal peptide occupies residues 1 to 18; that stretch reads MKALSPIAVLISALLLQG. A lipid anchor (N-palmitoyl cysteine) is attached at Cys-19. The S-diacylglycerol cysteine moiety is linked to residue Cys-19. 2 BON domains span residues 46–115 and 124–191; these read DDGT…RQGQ and NDTW…TFIK.

The protein belongs to the lipoprotein DolP family.

It is found in the cell outer membrane. Its function is as follows. Plays an important role in maintaining outer membrane integrity. This is Outer membrane lipoprotein DolP from Escherichia coli O157:H7.